The following is a 274-amino-acid chain: MTEARRSVYFISDRTGITAEALGHSLLTQFSIDFEQRTIPFVDTEEKAAQVVEQLNVASQRSGLRPIVFSTVVDAEVRRVLQTTDAVLFDFFDTFIAPLEQELRMPSSHVIGRSHGVVDNNMYDVRIDAMNYALNHDDGAVTHHYSRADVILTAVSRSGKTPTCIYLALQYGIYAANYPLTQDDLNRGKLPRKLVEHKRKLYGLTINVDRLQTIRSGRLPNSDYASLRQCSYEVARAEALFRSEGIPYVNTTTMSIEEIATKIIHEAKLERRLY.

Alanine 154 to threonine 161 contributes to the ADP binding site.

The protein belongs to the pyruvate, phosphate/water dikinase regulatory protein family. PSRP subfamily.

The enzyme catalyses [pyruvate, water dikinase] + ADP = [pyruvate, water dikinase]-phosphate + AMP + H(+). It carries out the reaction [pyruvate, water dikinase]-phosphate + phosphate + H(+) = [pyruvate, water dikinase] + diphosphate. Functionally, bifunctional serine/threonine kinase and phosphorylase involved in the regulation of the phosphoenolpyruvate synthase (PEPS) by catalyzing its phosphorylation/dephosphorylation. The chain is Putative phosphoenolpyruvate synthase regulatory protein from Alkalilimnicola ehrlichii (strain ATCC BAA-1101 / DSM 17681 / MLHE-1).